Reading from the N-terminus, the 262-residue chain is Orotidine 5'-phosphate decarboxylase (262 aa).

Residues D35, 57–59 (KTH), 89–98 (DRKFADIGNT), Y215, and R233 contribute to the substrate site. K91 acts as the Proton donor in catalysis.

This sequence belongs to the OMP decarboxylase family.

It carries out the reaction orotidine 5'-phosphate + H(+) = UMP + CO2. Its pathway is pyrimidine metabolism; UMP biosynthesis via de novo pathway; UMP from orotate: step 2/2. The chain is Orotidine 5'-phosphate decarboxylase (URA3) from Pichia kudriavzevii (Yeast).